Consider the following 68-residue polypeptide: Metallothionein-3 (68 aa).

Met-1 carries the post-translational modification N-acetylmethionine. Residues 1–30 form a beta region; the sequence is MDPETCPCPSGGSCTCADSCKCEGCKCTSC. 9 residues coordinate a divalent metal cation: Cys-6, Cys-8, Cys-14, Cys-16, Cys-20, Cys-22, Cys-25, Cys-27, and Cys-30. The interval 31–68 is alpha; it reads KKSCCSCCPAECEKCAKDCVCKGGEGAEAEAEKCSCCE. At Ser-33 the chain carries Phosphoserine. A divalent metal cation contacts are provided by Cys-34, Cys-35, Cys-37, Cys-38, Cys-42, Cys-45, Cys-49, Cys-51, Cys-64, Cys-66, and Cys-67.

Belongs to the metallothionein superfamily. Type 1 family.

Binds heavy metals. Contains five zinc and one copper atoms per polypeptide chain and only a negligible amount of cadmium. The polypeptide is Metallothionein-3 (MT3) (Macaca fascicularis (Crab-eating macaque)).